A 199-amino-acid polypeptide reads, in one-letter code: 3-isopropylmalate dehydratase small subunit (199 aa).

This sequence belongs to the LeuD family. LeuD type 1 subfamily. Heterodimer of LeuC and LeuD.

It catalyses the reaction (2R,3S)-3-isopropylmalate = (2S)-2-isopropylmalate. Its pathway is amino-acid biosynthesis; L-leucine biosynthesis; L-leucine from 3-methyl-2-oxobutanoate: step 2/4. Functionally, catalyzes the isomerization between 2-isopropylmalate and 3-isopropylmalate, via the formation of 2-isopropylmaleate. In Aeromonas salmonicida (strain A449), this protein is 3-isopropylmalate dehydratase small subunit.